Reading from the N-terminus, the 345-residue chain is Biotin synthase (345 aa).

The Radical SAM core domain maps to 60 to 287 (NQVQLSTLLS…RTMVRLSAGR (228 aa)). Cys-75, Cys-79, and Cys-82 together coordinate [4Fe-4S] cluster. Positions 119, 150, 210, and 282 each coordinate [2Fe-2S] cluster.

It belongs to the radical SAM superfamily. Biotin synthase family. As to quaternary structure, homodimer. [4Fe-4S] cluster serves as cofactor. It depends on [2Fe-2S] cluster as a cofactor.

The catalysed reaction is (4R,5S)-dethiobiotin + (sulfur carrier)-SH + 2 reduced [2Fe-2S]-[ferredoxin] + 2 S-adenosyl-L-methionine = (sulfur carrier)-H + biotin + 2 5'-deoxyadenosine + 2 L-methionine + 2 oxidized [2Fe-2S]-[ferredoxin]. It functions in the pathway cofactor biosynthesis; biotin biosynthesis; biotin from 7,8-diaminononanoate: step 2/2. Catalyzes the conversion of dethiobiotin (DTB) to biotin by the insertion of a sulfur atom into dethiobiotin via a radical-based mechanism. The sequence is that of Biotin synthase from Polaromonas naphthalenivorans (strain CJ2).